Consider the following 183-residue polypeptide: Translation initiation factor IF-3 (183 aa).

Residues 1-13 (MKQPDRNQQQGAK) are compositionally biased toward polar residues. The disordered stretch occupies residues 1-24 (MKQPDRNQQQGAKSNRPAINDEIR).

The protein belongs to the IF-3 family. In terms of assembly, monomer.

The protein resides in the cytoplasm. IF-3 binds to the 30S ribosomal subunit and shifts the equilibrium between 70S ribosomes and their 50S and 30S subunits in favor of the free subunits, thus enhancing the availability of 30S subunits on which protein synthesis initiation begins. The sequence is that of Translation initiation factor IF-3 from Acinetobacter baylyi (strain ATCC 33305 / BD413 / ADP1).